The chain runs to 1782 residues: Atrochrysone carboxylic acid synthase (1782 aa).

Positions 41–270 (HTYTKDRRYP…ALPVYGGLCH (230 aa)) are N-terminal acylcarrier protein transacylase domain (SAT). One can recognise a Ketosynthase family 3 (KS3) domain in the interval 407–841 (QSKIAIVGMS…GGNSTLAIEE (435 aa)). Active-site for beta-ketoacyl synthase activity residues include Cys580, His716, and His759. The interval 946–1266 (FAFTGQGSSY…LGILHCAGVP (321 aa)) is malonyl-CoA:ACP transacylase (MAT) domain. Positions 1331-1648 (TSTVQQIIHE…RILLNRFFSA (318 aa)) are product template (PT) domain. The interval 1335 to 1468 (QQIIHEQYDG…ATVYYEEASD (134 aa)) is N-terminal hotdog fold. Residues 1335–1643 (QQIIHEQYDG…FRRYPRILLN (309 aa)) enclose the PKS/mFAS DH domain. His1367 serves as the catalytic Proton acceptor; for dehydratase activity. The C-terminal hotdog fold stretch occupies residues 1495–1643 (VANRFTRRMA…FRRYPRILLN (149 aa)). The Proton donor; for dehydratase activity role is filled by Asp1554. A disordered region spans residues 1653-1703 (ARKSTPATSAPAPAPPAGSEALQPKAAPASTPAAPASADAPTTNGVKAAAE). Over residues 1678-1695 (AAPASTPAAPASADAPTT) the composition is skewed to low complexity. In terms of domain architecture, Carrier spans 1704 to 1781 (PDANSTAAKA…DLKSWLLEYY (78 aa)). Ser1741 carries the post-translational modification O-(pantetheine 4'-phosphoryl)serine.

In terms of tissue distribution, specifically expressed in conidia.

It catalyses the reaction holo-[ACP] + 8 malonyl-CoA + 8 H(+) = atrochrysone carboxyl-[ACP] + 8 CO2 + 8 CoA + 2 H2O. It functions in the pathway secondary metabolite biosynthesis. Non-reducing polyketide synthase; part of the gene cluster that mediates the biosynthesis of trypacidin, a mycotoxin with antiprotozoal activity and that plays a role in the infection process. The pathway begins with the synthesis of atrochrysone thioester by the polyketide synthase (PKS) tpcC. The atrochrysone carboxyl ACP thioesterase tpcB then breaks the thioester bond and releases the atrochrysone carboxylic acid from tpcC. The decarboxylase tpcK converts atrochrysone carboxylic acid to atrochrysone which is further reduced into emodin anthrone. The next step is performed by the emodin anthrone oxygenase tpcL that catalyzes the oxidation of emodin anthrone to emodin. Emodin O-methyltransferase encoded by tpcA catalyzes methylation of the 8-hydroxy group of emodin to form questin. Ring cleavage of questin by questin oxidase tpcI leads to desmethylsulochrin via several intermediates including questin epoxide. Another methylation step catalyzed by tpcM leads to the formation of sulochrin which is further converted to monomethylsulfochrin by tpcH. Finally, the tpcJ catalyzes the conversion of monomethylsulfochrin to trypacidin. Trypacidin is toxic for human pulmonary and bronchial epithelial cells by initiating the intracellular formation of nitric oxide (NO) and hydrogen peroxide (H(2)O(2)), thus triggering host necrotic cell death. The trypacidin pathway is also able to produce endocrocin via a distinct route from the endocrocin Enc pathway. This is Atrochrysone carboxylic acid synthase from Aspergillus fumigatus (strain ATCC MYA-4609 / CBS 101355 / FGSC A1100 / Af293) (Neosartorya fumigata).